The sequence spans 729 residues: Polyribonucleotide nucleotidyltransferase (729 aa).

2 residues coordinate Mg(2+): aspartate 516 and aspartate 522. In terms of domain architecture, KH spans 581-641 (PSTEHFSINP…EKVAAAKEHI (61 aa)). The region spanning 658–725 (GKTYVGKVKK…KGKKVELATP (68 aa)) is the S1 motif domain.

It belongs to the polyribonucleotide nucleotidyltransferase family. Mg(2+) serves as cofactor.

The protein localises to the cytoplasm. The enzyme catalyses RNA(n+1) + phosphate = RNA(n) + a ribonucleoside 5'-diphosphate. Its function is as follows. Involved in mRNA degradation. Catalyzes the phosphorolysis of single-stranded polyribonucleotides processively in the 3'- to 5'-direction. The chain is Polyribonucleotide nucleotidyltransferase from Sulfurovum sp. (strain NBC37-1).